Reading from the N-terminus, the 303-residue chain is Probable cell division protein WhiA (303 aa).

A DNA-binding region (H-T-H motif) is located at residues 272–303; that stretch reads SIQQLADSLSRPLTKSGVNHRLRKINKIADEL.

The protein belongs to the WhiA family.

In terms of biological role, involved in cell division and chromosome segregation. In Streptococcus sanguinis (strain SK36), this protein is Probable cell division protein WhiA.